The following is a 372-amino-acid chain: Glutamate 5-kinase (372 aa).

Residue Lys-14 coordinates ATP. The substrate site is built by Ser-54, Asp-141, and Asn-153. 173-174 is an ATP binding site; sequence TD. In terms of domain architecture, PUA spans 280–358; sequence AGAVVLDNGA…ADIAAILGFV (79 aa).

This sequence belongs to the glutamate 5-kinase family.

It localises to the cytoplasm. The enzyme catalyses L-glutamate + ATP = L-glutamyl 5-phosphate + ADP. It functions in the pathway amino-acid biosynthesis; L-proline biosynthesis; L-glutamate 5-semialdehyde from L-glutamate: step 1/2. Its function is as follows. Catalyzes the transfer of a phosphate group to glutamate to form L-glutamate 5-phosphate. This Janthinobacterium sp. (strain Marseille) (Minibacterium massiliensis) protein is Glutamate 5-kinase.